A 41-amino-acid chain; its full sequence is Pi-stichotoxin-Hmg5c (41 aa).

3 disulfide bridges follow: C4–C37, C6–C30, and C20–C38.

This sequence belongs to the sea anemone type 3 (BDS) potassium channel toxin family.

It is found in the secreted. The protein resides in the nematocyst. Its function is as follows. Toxin with different activities on acid-sensing ion channels (ASIC) and nicotinic acetylcholine receptors. Is able to bind T.californica muscle-type nicotinic acetylcholine receptors (nAChR) (alpha-1-beta-1-delta-epsilon (CHRNA1-CHRNB1-CHRND-CHRNE)), and human alpha-7/CHRNA7 nicotinic acetylcholine receptors. Weakly and reversibly inhibits rat homomeric ASIC1 (isoform ASIC1a) (IC(50)=1.25 uM), while it potentiates rat homomeric ASIC3 (EC(50)=1.53 uM). Rat ASIC1a current inhibition is not complete, and reaches a maximum of 86% inhibition. On rat ASIC3, does not activate the channel itself, but produces a remarkable potentiation of the transient current resulting from the acidic pulse. At the maximal applied concentration, elicits responses that are twice as high as those produced by extracellular protons. Surprisingly, shows a different activity on human ASIC3. On the truncated human ASIC3 (ASIC3-D20), the toxin weakly inhibits the channel. Molecular modeling interaction with rat ASIC1a suggests that it hinders the collapse of acidic pockets and stabilizes nonconducting channels state. In vivo, causes an anxiolytic effect on mouse behavior. Also shows an analgesic activity in an acid-induced muscle pain model, and important anti-inflammatory effect in models of acute local inflammation. The polypeptide is Pi-stichotoxin-Hmg5c (Heteractis magnifica (Magnificent sea anemone)).